Consider the following 1381-residue polypeptide: Protein HEG homolog 1 (1381 aa).

Positions Met-1–Gly-29 are cleaved as a signal peptide. The tract at residues Pro-24–Ala-108 is disordered. Over residues Pro-25–Pro-37 the composition is skewed to pro residues. Topologically, residues Thr-30 to Leu-1248 are extracellular. Positions Ala-38–Leu-52 are enriched in low complexity. Over residues Gln-55–Gly-74 the composition is skewed to basic and acidic residues. O-linked (GalNAc...) threonine glycosylation is present at Thr-67. Positions Arg-93–Ala-105 are enriched in low complexity. N-linked (GlcNAc...) asparagine glycans are attached at residues Asn-123, Asn-159, Asn-180, and Asn-314. Residues Asp-301–Thr-316 show a composition bias toward low complexity. Disordered stretches follow at residues Asp-301–Gln-325 and Pro-376–Ala-447. The span at Leu-424–Arg-444 shows a compositional bias: polar residues. Asn-462, Asn-520, and Asn-610 each carry an N-linked (GlcNAc...) asparagine glycan. The tract at residues Ser-491 to Ser-529 is disordered. The span at Ser-508–Ser-522 shows a compositional bias: low complexity. 3 disordered regions span residues Ser-612 to Ser-680, Ser-706 to Ser-757, and Gln-774 to Ala-830. A compositionally biased stretch (polar residues) spans Gln-620 to Val-648. Composition is skewed to low complexity over residues Ser-657–Ser-680 and Ser-706–Pro-748. Polar residues-rich tracts occupy residues Gln-774–Pro-784 and Glu-792–Val-809. The span at Thr-810–Glu-825 shows a compositional bias: low complexity. One can recognise an EGF-like 1 domain in the interval Ser-985–Ser-1023. 6 disulfides stabilise this stretch: Cys-989-Cys-1000, Cys-994-Cys-1011, Cys-1013-Cys-1022, Cys-1029-Cys-1040, Cys-1034-Cys-1049, and Cys-1051-Cys-1062. The 39-residue stretch at Asp-1025–Asn-1063 folds into the EGF-like 2; calcium-binding domain. N-linked (GlcNAc...) asparagine glycosylation occurs at Asn-1137. The helical transmembrane segment at Ile-1249–Ile-1269 threads the bilayer. Over Val-1270 to Phe-1381 the chain is Cytoplasmic. Residue Ser-1359 is modified to Phosphoserine.

As to quaternary structure, interacts with CCM2 and KRIT1; KRIT1 markedly facilitates interaction with CCM2.

It is found in the cell membrane. It localises to the cell junction. The protein resides in the secreted. Its function is as follows. Receptor component of the CCM signaling pathway which is a crucial regulator of heart and vessel formation and integrity. May act through the stabilization of endothelial cell junctions. The sequence is that of Protein HEG homolog 1 (HEG1) from Homo sapiens (Human).